The following is a 329-amino-acid chain: ATPase ASNA1 homolog 1 (329 aa).

26 to 33 (KGGVGKTT) is a binding site for ATP. The active site involves Asp55. Residues Glu235 and Asn262 each coordinate ATP. Zn(2+)-binding residues include Cys271 and Cys274.

Belongs to the arsA ATPase family. Homodimer.

Its subcellular location is the cytoplasm. The protein localises to the endoplasmic reticulum. ATPase required for the post-translational delivery of tail-anchored (TA) proteins to the endoplasmic reticulum. Recognizes and selectively binds the transmembrane domain of TA proteins in the cytosol. This complex then targets to the endoplasmic reticulum by membrane-bound receptors, where the tail-anchored protein is released for insertion. This process is regulated by ATP binding and hydrolysis. ATP binding drives the homodimer towards the closed dimer state, facilitating recognition of newly synthesized TA membrane proteins. ATP hydrolysis is required for insertion. Subsequently, the homodimer reverts towards the open dimer state, lowering its affinity for the membrane-bound receptor, and returning it to the cytosol to initiate a new round of targeting. The sequence is that of ATPase ASNA1 homolog 1 from Paramecium tetraurelia.